Here is a 625-residue protein sequence, read N- to C-terminus: Probable potassium transport system protein Kup 1 (625 aa).

The next 12 membrane-spanning stretches (helical) occupy residues 14–34 (LSLL…TSPL), 50–70 (AAAV…ITTV), 104–124 (IVAL…ITPA), 139–159 (PALQ…LFAI), 170–190 (LFGP…LVGI), 213–233 (GATG…AEAL), 249–269 (WFAV…ALVI), 287–307 (LLLP…QSVI), 339–359 (IYVG…TIGF), 368–388 (AYGI…FIAM), 396–416 (LLAA…FFLA), and 421–441 (IAEG…LMWI).

This sequence belongs to the HAK/KUP transporter (TC 2.A.72) family.

It localises to the cell inner membrane. The catalysed reaction is K(+)(in) + H(+)(in) = K(+)(out) + H(+)(out). In terms of biological role, transport of potassium into the cell. Likely operates as a K(+):H(+) symporter. The sequence is that of Probable potassium transport system protein Kup 1 from Bradyrhizobium sp. (strain ORS 278).